A 740-amino-acid polypeptide reads, in one-letter code: NAD(P)H-quinone oxidoreductase subunit 5, chloroplastic (740 aa).

The next 16 membrane-spanning stretches (helical) occupy residues 9–29 (WIIPFIPLPVPILLGGGLLLF), 40–60 (WSFLSIFLLSIVMIFSLYLSI), 89–109 (IDPLTCIMLILITTVGILVLI), 125–145 (FAYMGFFNTSMLGLVTSSNLI), 147–167 (IYFFWELVGMCSYLLIGFWFT), 185–205 (GDFGLLLGILGLYWVTGSFEF), 221–241 (VNLLFLTLCAFLLFMGPIAKS), 258–278 (TPISALIHAATMVAAGIFLVA), 283–303 (LFIVIPSIMYIISLIGIITIL), 327–347 (LGYMMLALGMGSYRSALFHLI), 354–374 (ALLFLGSGSIIHSMEAIVGYS), 396–416 (TAFLLGTLSLCGIPPLACFWS), 425–445 (LLFSPIFAIIACSTAGLTAFY), 547–567 (ILFPMLVLLLFTLFIGAIGIP), 606–626 (FSVSIAFFGIFIAYCLYKPFY), and 718–738 (ISSYLFLYLSYVFLFFLFLKI).

It belongs to the complex I subunit 5 family. In terms of assembly, NDH is composed of at least 16 different subunits, 5 of which are encoded in the nucleus.

It is found in the plastid. It localises to the chloroplast thylakoid membrane. The catalysed reaction is a plastoquinone + NADH + (n+1) H(+)(in) = a plastoquinol + NAD(+) + n H(+)(out). The enzyme catalyses a plastoquinone + NADPH + (n+1) H(+)(in) = a plastoquinol + NADP(+) + n H(+)(out). In terms of biological role, NDH shuttles electrons from NAD(P)H:plastoquinone, via FMN and iron-sulfur (Fe-S) centers, to quinones in the photosynthetic chain and possibly in a chloroplast respiratory chain. The immediate electron acceptor for the enzyme in this species is believed to be plastoquinone. Couples the redox reaction to proton translocation, and thus conserves the redox energy in a proton gradient. This is NAD(P)H-quinone oxidoreductase subunit 5, chloroplastic (ndhF) from Aethionema cordifolium (Lebanon stonecress).